The chain runs to 772 residues: Cellulosomal-scaffolding protein B (772 aa).

A Cohesin 1 domain is found at 1 to 80; it reads DPSKSFDSAI…TTFVAGGVNL (80 aa). The segment at 81 to 93 is linker (Pro/Thr-rich); it reads GSSVPTTQPNVPS. Residues 94–240 form the Cohesin 2 domain; that stretch reads DGVVVEIGKV…VNVGNATPTK (147 aa). The span at 235 to 276 shows a compositional bias: low complexity; sequence NATPTKGATPTNTATPTKSATATPPGHSVPTNTPTNTPANTP. Disordered stretches follow at residues 235-277 and 438-464; these read NATP…NTPV and VVPS…PSDD. Positions 241 to 272 are linker (Pro/Thr-rich); sequence GATPTNTATPTKSATATPPGHSVPTNTPTNTP. Residues 277–435 form the CBM3 domain; sequence VSGNLKVEFY…GVLVWGKEPG (159 aa). Residues 438 to 461 are compositionally biased toward low complexity; that stretch reads VVPSTQPVTTPPATTKPPATTIPP. The interval 440-461 is linker (Pro/Thr-rich); sequence PSTQPVTTPPATTKPPATTIPP. Residues 462–607 form the Cohesin 3 domain; sequence SDDPNAIKIK…ETDLINGGVL (146 aa). The 68-residue stretch at 704 to 771 folds into the Dockerin domain; the sequence is IMMWVGDIVK…FGATSSDYDA (68 aa).

In terms of processing, O-glycosylated on most but not all Thr residues of the linker units.

It localises to the secreted. Its function is as follows. Acts as a scaffolding protein in the cellulosome. It promotes binding of cellulose to the catalytic domains of the cellulolytic enzymes probably through the binding of the nine repeated domains with dockerin domains present in catalytic subunits of the cellulosome. The protein is Cellulosomal-scaffolding protein B (cipB) of Acetivibrio thermocellus (Hungateiclostridium thermocellum).